Here is a 493-residue protein sequence, read N- to C-terminus: Protein dml1 (493 aa).

Belongs to the misato family.

It is found in the mitochondrion. Its function is as follows. Involved in the partitioning of the mitochondrial organelle and mitochondrial DNA (mtDNA) inheritance. The sequence is that of Protein dml1 (dml1) from Aspergillus oryzae (strain ATCC 42149 / RIB 40) (Yellow koji mold).